Consider the following 446-residue polypeptide: MGKHYLPNSAHKDEMLKKIGFNSIEDLFSDVPKGMVKEFNLPEGRSEYEVFLELNEVLSKNKTVLEMPSFLGAGTYFHYIPAHVKYLIERSEFLTAYTPYQPEISQGMLQALFEYQSLIAELVGLPIVNSSMYDWGTAMAEAALMSARVTRKNKFVVPEHMSPEKKKVLHTYTAGPGLEIEYVNWNERGQLDLEELKEKVEGAAGVYVEMPNFFGILEEEIRAIGEIAHDAGALFVVGVDPTILGIVEAPGELGADIVVGEAAYFGNPMNFGGPRAGIFAVRDDKKLIRQMPGRIIGMTKDADGKRAFVMTLQTREQHIRRAKATSNICSNEALVAVAAAIHLASLGPRGLRELGEVILKNTAYLKKRLSEVAEIPFEGVNFKDVLVRFEKSYEEIHEVLLERNIHGGFYLKPHFPELGESALFAATETTRKEWVDALIEALREVA.

This sequence belongs to the GcvP family. N-terminal subunit subfamily. In terms of assembly, the glycine cleavage system is composed of four proteins: P, T, L and H. In this organism, the P 'protein' is a heterodimer of two subunits.

It carries out the reaction N(6)-[(R)-lipoyl]-L-lysyl-[glycine-cleavage complex H protein] + glycine + H(+) = N(6)-[(R)-S(8)-aminomethyldihydrolipoyl]-L-lysyl-[glycine-cleavage complex H protein] + CO2. The glycine cleavage system catalyzes the degradation of glycine. The P protein binds the alpha-amino group of glycine through its pyridoxal phosphate cofactor; CO(2) is released and the remaining methylamine moiety is then transferred to the lipoamide cofactor of the H protein. The sequence is that of Probable glycine dehydrogenase (decarboxylating) subunit 1 from Thermococcus onnurineus (strain NA1).